The primary structure comprises 152 residues: UPF0179 protein Mlab_1307 (152 aa).

Belongs to the UPF0179 family.

This chain is UPF0179 protein Mlab_1307, found in Methanocorpusculum labreanum (strain ATCC 43576 / DSM 4855 / Z).